Consider the following 754-residue polypeptide: 5-methyltetrahydropteroyltriglutamate--homocysteine methyltransferase (754 aa).

Residues 17–20 and Lys117 each bind 5-methyltetrahydropteroyltri-L-glutamate; that span reads RELK. L-homocysteine-binding positions include 431–433 and Glu484; that span reads IGS. Residues 431–433 and Glu484 contribute to the L-methionine site; that span reads IGS. Residues 515–516 and Trp561 each bind 5-methyltetrahydropteroyltri-L-glutamate; that span reads RC. Asp599 contributes to the L-homocysteine binding site. Asp599 serves as a coordination point for L-methionine. Residue Glu605 coordinates 5-methyltetrahydropteroyltri-L-glutamate. Zn(2+)-binding residues include His641, Cys643, and Glu665. His694 (proton donor) is an active-site residue. Cys726 contacts Zn(2+).

Belongs to the vitamin-B12 independent methionine synthase family. Zn(2+) is required as a cofactor.

It catalyses the reaction 5-methyltetrahydropteroyltri-L-glutamate + L-homocysteine = tetrahydropteroyltri-L-glutamate + L-methionine. Its pathway is amino-acid biosynthesis; L-methionine biosynthesis via de novo pathway; L-methionine from L-homocysteine (MetE route): step 1/1. In terms of biological role, catalyzes the transfer of a methyl group from 5-methyltetrahydrofolate to homocysteine resulting in methionine formation. The chain is 5-methyltetrahydropteroyltriglutamate--homocysteine methyltransferase from Salmonella paratyphi A (strain ATCC 9150 / SARB42).